Consider the following 426-residue polypeptide: Histidine--tRNA ligase (426 aa).

It belongs to the class-II aminoacyl-tRNA synthetase family.

The protein localises to the cytoplasm. It catalyses the reaction tRNA(His) + L-histidine + ATP = L-histidyl-tRNA(His) + AMP + diphosphate + H(+). This is Histidine--tRNA ligase (hisS) from Thermoplasma volcanium (strain ATCC 51530 / DSM 4299 / JCM 9571 / NBRC 15438 / GSS1).